A 114-amino-acid chain; its full sequence is Abscisic stress-ripening protein 2 (114 aa).

Disordered regions lie at residues 1 to 25 (MAEE…GGPV) and 88 to 114 (FHEH…HHHY). Positions 7–16 (QHHHHLFHHK) are enriched in basic residues. Residues 97–107 (AKKEKKEVEGG) are compositionally biased toward basic and acidic residues.

It belongs to the abscisic acid and water stress-induced protein family.

This Solanum lycopersicum (Tomato) protein is Abscisic stress-ripening protein 2.